Here is a 114-residue protein sequence, read N- to C-terminus: Dolichyl-diphosphooligosaccharide--protein glycosyltransferase subunit DAD2 (114 aa).

At 1-30 (MPKAAGDAKLLIQSLNKAYAATPTNLKIID) the chain is on the cytoplasmic side. A helical transmembrane segment spans residues 31-51 (LYVVFAVATALVQVVYMGIVG). Residues 52 to 54 (SFP) are Lumenal-facing. Residues 55–75 (FNSFLSGVLSSIGTAVLGVCL) traverse the membrane as a helical segment. The Cytoplasmic segment spans residues 76–93 (RIQVNKDNKEFKDLPPER). The chain crosses the membrane as a helical span at residues 94–114 (AFADFVLCNLVLHLVIMNFLG).

The protein belongs to the DAD/OST2 family. Component of the oligosaccharyltransferase (OST) complex.

The protein localises to the endoplasmic reticulum membrane. Its pathway is protein modification; protein glycosylation. In terms of biological role, subunit of the oligosaccharyl transferase (OST) complex that catalyzes the initial transfer of a defined glycan (Glc(3)Man(9)GlcNAc(2) in eukaryotes) from the lipid carrier dolichol-pyrophosphate to an asparagine residue within an Asn-X-Ser/Thr consensus motif in nascent polypeptide chains, the first step in protein N-glycosylation. N-glycosylation occurs cotranslationally and the complex associates with the Sec61 complex at the channel-forming translocon complex that mediates protein translocation across the endoplasmic reticulum (ER). All subunits are required for a maximal enzyme activity. The protein is Dolichyl-diphosphooligosaccharide--protein glycosyltransferase subunit DAD2 (DAD2) of Hordeum vulgare (Barley).